The chain runs to 364 residues: Dual-specificity RNA methyltransferase RlmN (364 aa).

Glu91 acts as the Proton acceptor in catalysis. Positions 97–333 constitute a Radical SAM core domain; the sequence is ESDRGTLCIS…VTVRKTRGDD (237 aa). A disulfide bridge links Cys104 with Cys338. Residues Cys111, Cys115, and Cys118 each contribute to the [4Fe-4S] cluster site. Residues 164–165, Ser196, 218–220, and Asn295 contribute to the S-adenosyl-L-methionine site; these read GE and SLH. Cys338 functions as the S-methylcysteine intermediate in the catalytic mechanism.

The protein belongs to the radical SAM superfamily. RlmN family. The cofactor is [4Fe-4S] cluster.

It localises to the cytoplasm. It carries out the reaction adenosine(2503) in 23S rRNA + 2 reduced [2Fe-2S]-[ferredoxin] + 2 S-adenosyl-L-methionine = 2-methyladenosine(2503) in 23S rRNA + 5'-deoxyadenosine + L-methionine + 2 oxidized [2Fe-2S]-[ferredoxin] + S-adenosyl-L-homocysteine. It catalyses the reaction adenosine(37) in tRNA + 2 reduced [2Fe-2S]-[ferredoxin] + 2 S-adenosyl-L-methionine = 2-methyladenosine(37) in tRNA + 5'-deoxyadenosine + L-methionine + 2 oxidized [2Fe-2S]-[ferredoxin] + S-adenosyl-L-homocysteine. In terms of biological role, specifically methylates position 2 of adenine 2503 in 23S rRNA and position 2 of adenine 37 in tRNAs. m2A2503 modification seems to play a crucial role in the proofreading step occurring at the peptidyl transferase center and thus would serve to optimize ribosomal fidelity. The chain is Dual-specificity RNA methyltransferase RlmN from Neisseria meningitidis serogroup A / serotype 4A (strain DSM 15465 / Z2491).